Consider the following 452-residue polypeptide: MITLKEALKLSKDEILALRKELKDKILKTKDLGAYIEQLTGEDLNESGSGIPIAIKDNIQVKNWSVTSASNILQGYVAPYDATVITKLRSAGFAPFGRTNMDEFAMGSTTESSFYGKTLNPTDYSRVPGGSSGGSAAAVAAGIAVAALGSDTGGSIRQPAAFCGCVGFKPTYGRVSRYGLAAYSSSLDQIGPITQNVTDAAILFDVIAGYDKMDSTSYSKEFISTADKLNSDRKLTIAVIENFVNETKDEVKSALLKTIEKLKSAGHKIIYKNLLNSKYNIAAYYIIATAEASTNLSRYDGVRYGNRAKASNLNELYANTRSAGFGEEVQRRMLLGTFVLSSGYYDAYYIKAQKARAYIKKEYEKILDEADLIFMPIAPSVAYKFGELANPLDAYLSDVYTIGVNLAGLPAISVPIAKNSENLNISAQLIGRAYDEQTVLDGALNLEKIIKG.

Active-site charge relay system residues include Lys56 and Ser131. Ser155 acts as the Acyl-ester intermediate in catalysis.

Belongs to the amidase family. GatA subfamily. Heterotrimer of A, B and C subunits.

It carries out the reaction L-glutamyl-tRNA(Gln) + L-glutamine + ATP + H2O = L-glutaminyl-tRNA(Gln) + L-glutamate + ADP + phosphate + H(+). Allows the formation of correctly charged Gln-tRNA(Gln) through the transamidation of misacylated Glu-tRNA(Gln) in organisms which lack glutaminyl-tRNA synthetase. The reaction takes place in the presence of glutamine and ATP through an activated gamma-phospho-Glu-tRNA(Gln). The sequence is that of Glutamyl-tRNA(Gln) amidotransferase subunit A from Campylobacter hominis (strain ATCC BAA-381 / DSM 21671 / CCUG 45161 / LMG 19568 / NCTC 13146 / CH001A).